A 399-amino-acid polypeptide reads, in one-letter code: Putative cytochrome P450 133B2 (399 aa).

Cys-348 contacts heme.

It belongs to the cytochrome P450 family. It depends on heme as a cofactor.

This is Putative cytochrome P450 133B2 (cyp133B2) from Xylella fastidiosa (strain Temecula1 / ATCC 700964).